We begin with the raw amino-acid sequence, 279 residues long: MAIRKYKPTTPGRRGSSVADFAEITRSTPEKSLLRPLPKHGGRNNAGRITTRHIGGGHKRQYRVIDFKRNDKDGVLATVAHIEYDPNRTARIALLHFIDGSKRYIIAPNKLKQGDKIESGPQADIKPGNNLPLRNIPTGTVIHAIELRPGGGAKMGRSAGASVRLVAKDGPYAQLRLPSGEIRNVDARCRATIGEVGNAEQSNINWGKAGRMRWKGVRPTVRGVAMNPVDHPHGGGEGKTSGGRHPVSPWGQKEGRTRHINKPSDKLIVRRRNAGKKRK.

Disordered stretches follow at residues 32-53 (SLLR…TTRH) and 225-279 (AMNP…KKRK). Over residues 253 to 268 (KEGRTRHINKPSDKLI) the composition is skewed to basic and acidic residues. Basic residues predominate over residues 269-279 (VRRRNAGKKRK).

Belongs to the universal ribosomal protein uL2 family. As to quaternary structure, part of the 50S ribosomal subunit. Forms a bridge to the 30S subunit in the 70S ribosome.

Its function is as follows. One of the primary rRNA binding proteins. Required for association of the 30S and 50S subunits to form the 70S ribosome, for tRNA binding and peptide bond formation. It has been suggested to have peptidyltransferase activity; this is somewhat controversial. Makes several contacts with the 16S rRNA in the 70S ribosome. The sequence is that of Large ribosomal subunit protein uL2 from Clavibacter michiganensis subsp. michiganensis (strain NCPPB 382).